We begin with the raw amino-acid sequence, 854 residues long: Discoidin domain-containing receptor 2 (854 aa).

The first 21 residues, methionine 1 to alanine 21, serve as a signal peptide directing secretion. The Extracellular segment spans residues lysine 22–arginine 399. Positions cysteine 30–cysteine 185 constitute an F5/8 type C domain. 2 disulfides stabilise this stretch: cysteine 30–cysteine 185 and cysteine 73–cysteine 177. 5 N-linked (GlcNAc...) asparagine glycosylation sites follow: asparagine 121, asparagine 213, asparagine 261, asparagine 280, and asparagine 372. Residues isoleucine 400 to tryptophan 421 form a helical membrane-spanning segment. The Cytoplasmic segment spans residues arginine 422 to glutamate 854. A disordered region spans residues serine 452–tyrosine 471. The segment covering asparagine 455–serine 469 has biased composition (low complexity). Tyrosine 471 bears the Phosphotyrosine; by SRC and autocatalysis mark. The region spanning leucine 563–leucine 848 is the Protein kinase domain. ATP is bound by residues leucine 569 to valine 577 and lysine 608. Aspartate 709 (proton acceptor) is an active-site residue. A phosphotyrosine; by SRC and autocatalysis mark is found at tyrosine 735, tyrosine 739, and tyrosine 740.

Belongs to the protein kinase superfamily. Tyr protein kinase family. Insulin receptor subfamily. Binds hydroxyproline-rich sequence motifs in fibrillar, glycosylated collagen, such as the GQOGVMGFO motif, where O stands for hydroxyproline. Interacts with SRC. Interacts (tyrosine phosphorylated) with SHC1. Post-translationally, N-glycosylated. In terms of processing, tyrosine phosphorylated in response to collagen binding. Phosphorylated by SRC; this is required for activation and subsequent autophosphorylation on additional tyrosine residues. In terms of tissue distribution, widely expressed. Detected in lung, ovary, skin and in testis Leydig cells (at protein level). Widely expressed. Detected at high levels in heart, lung, skeletal muscle, central nervous system (CNS) and kidney, and at lower levels in brain and testis. Detected in chondrocytes in tibia growth plates of young mice.

The protein resides in the cell membrane. The enzyme catalyses L-tyrosyl-[protein] + ATP = O-phospho-L-tyrosyl-[protein] + ADP + H(+). Its activity is regulated as follows. Present in an inactive state in the absence of collagen binding and phosphorylation by SRC. Tyrosine phosphorylation enhances the affinity for ATP and the catalytic activity. In terms of biological role, tyrosine kinase that functions as a cell surface receptor for fibrillar collagen and regulates cell differentiation, remodeling of the extracellular matrix, cell migration and cell proliferation. Required for normal bone development. Regulates osteoblast differentiation and chondrocyte maturation via a signaling pathway that involves MAP kinases and leads to the activation of the transcription factor RUNX2. Regulates remodeling of the extracellular matrix by up-regulation of the collagenases MMP1, MMP2 and MMP13, and thereby facilitates cell migration and tumor cell invasion. Promotes fibroblast migration and proliferation, and thereby contributes to cutaneous wound healing. This chain is Discoidin domain-containing receptor 2 (Ddr2), found in Mus musculus (Mouse).